The sequence spans 153 residues: MSLDLALDIQHATTCDWLPTDEQFALWVTTAIGNSMNEAELTIRIVDSRESQMLNSTYRGKDKPTNVLSFPFEAPPEIELPLLGDLVICAAVVENEAREQQKTLEAHWAHMVVHGCLHLLGYDHIEDEEAEEMESLETQLIEGLGFTDPYKEQ.

Residues histidine 114, histidine 118, and histidine 124 each coordinate Zn(2+).

Belongs to the endoribonuclease YbeY family. Zn(2+) serves as cofactor.

The protein resides in the cytoplasm. In terms of biological role, single strand-specific metallo-endoribonuclease involved in late-stage 70S ribosome quality control and in maturation of the 3' terminus of the 16S rRNA. This chain is Endoribonuclease YbeY, found in Shewanella baltica (strain OS185).